Reading from the N-terminus, the 383-residue chain is Glutamyl-tRNA reductase (383 aa).

Substrate-binding positions include 38-41 (TCNR), S82, 87-89 (EDQ), and Q93. The Nucleophile role is filled by C39. 161–166 (GAGEIA) is an NADP(+) binding site.

Belongs to the glutamyl-tRNA reductase family. In terms of assembly, homodimer.

The catalysed reaction is (S)-4-amino-5-oxopentanoate + tRNA(Glu) + NADP(+) = L-glutamyl-tRNA(Glu) + NADPH + H(+). Its pathway is porphyrin-containing compound metabolism; protoporphyrin-IX biosynthesis; 5-aminolevulinate from L-glutamyl-tRNA(Glu): step 1/2. In terms of biological role, catalyzes the NADPH-dependent reduction of glutamyl-tRNA(Glu) to glutamate 1-semialdehyde (GSA). In Methanococcus aeolicus (strain ATCC BAA-1280 / DSM 17508 / OCM 812 / Nankai-3), this protein is Glutamyl-tRNA reductase.